The chain runs to 236 residues: Small ribosomal subunit protein uS2c (236 aa).

This sequence belongs to the universal ribosomal protein uS2 family.

It is found in the plastid. The protein localises to the chloroplast. The sequence is that of Small ribosomal subunit protein uS2c (rps2) from Oenothera parviflora (Small-flowered evening primrose).